A 263-amino-acid chain; its full sequence is Glucosamine-6-phosphate deaminase (263 aa).

The Proton acceptor; for enolization step role is filled by Asp-72. Residue Asp-141 is the For ring-opening step of the active site. His-143 functions as the Proton acceptor; for ring-opening step in the catalytic mechanism. Catalysis depends on Glu-148, which acts as the For ring-opening step.

Belongs to the glucosamine/galactosamine-6-phosphate isomerase family. NagB subfamily.

The catalysed reaction is alpha-D-glucosamine 6-phosphate + H2O = beta-D-fructose 6-phosphate + NH4(+). The protein operates within amino-sugar metabolism; N-acetylneuraminate degradation; D-fructose 6-phosphate from N-acetylneuraminate: step 5/5. Its activity is regulated as follows. Allosterically activated by N-acetylglucosamine 6-phosphate (GlcNAc6P). Functionally, catalyzes the reversible isomerization-deamination of glucosamine 6-phosphate (GlcN6P) to form fructose 6-phosphate (Fru6P) and ammonium ion. This Phocaeicola vulgatus (strain ATCC 8482 / DSM 1447 / JCM 5826 / CCUG 4940 / NBRC 14291 / NCTC 11154) (Bacteroides vulgatus) protein is Glucosamine-6-phosphate deaminase.